The following is a 272-amino-acid chain: 2-amino-3,7-dideoxy-D-threo-hept-6-ulosonate synthase (272 aa).

The Proton acceptor role is filled by Asp-33. Residues 33–37 (DHGVS) and 153–155 (YPR) contribute to the 1-deoxy-D-threo-hexo-2,5-diulose 6-phosphate site. Tyr-153 functions as the Proton donor in the catalytic mechanism. The active-site Schiff-base intermediate with substrate is the Lys-184. 1-deoxy-D-threo-hexo-2,5-diulose 6-phosphate-binding positions include 209–210 (GG) and 237–238 (GR).

Belongs to the DeoC/FbaB aldolase family. ADHS subfamily. As to quaternary structure, homodecamer.

The enzyme catalyses 1-deoxy-D-threo-hexo-2,5-diulose 6-phosphate + L-aspartate 4-semialdehyde = 2,3-dioxopropyl phosphate + 2-amino-2,3,7-trideoxy-D-lyxo-hept-6-ulosonate. In terms of biological role, catalyzes a transaldol reaction between 6-deoxy-5-ketofructose 1-phosphate (DKFP) and L-aspartate semialdehyde (ASA) with an elimination of hydroxypyruvaldehyde phosphate to yield 2-amino-3,7-dideoxy-D-threo-hept-6-ulosonate (ADH). Plays a key role in an alternative pathway of the biosynthesis of 3-dehydroquinate (DHQ), which is involved in the canonical pathway for the biosynthesis of aromatic amino acids. The polypeptide is 2-amino-3,7-dideoxy-D-threo-hept-6-ulosonate synthase (Methanococcus vannielii (strain ATCC 35089 / DSM 1224 / JCM 13029 / OCM 148 / SB)).